A 238-amino-acid chain; its full sequence is Ribonuclease PH (238 aa).

Phosphate is bound by residues Arg-86 and 124–126 (GTR).

The protein belongs to the RNase PH family. As to quaternary structure, homohexameric ring arranged as a trimer of dimers.

The enzyme catalyses tRNA(n+1) + phosphate = tRNA(n) + a ribonucleoside 5'-diphosphate. Its function is as follows. Phosphorolytic 3'-5' exoribonuclease that plays an important role in tRNA 3'-end maturation. Removes nucleotide residues following the 3'-CCA terminus of tRNAs; can also add nucleotides to the ends of RNA molecules by using nucleoside diphosphates as substrates, but this may not be physiologically important. Probably plays a role in initiation of 16S rRNA degradation (leading to ribosome degradation) during starvation. This Haemophilus influenzae (strain PittGG) protein is Ribonuclease PH.